The chain runs to 265 residues: tRNA pseudouridine synthase A (265 aa).

Aspartate 58 functions as the Nucleophile in the catalytic mechanism. Tyrosine 116 provides a ligand contact to substrate.

This sequence belongs to the tRNA pseudouridine synthase TruA family. In terms of assembly, homodimer.

The catalysed reaction is uridine(38/39/40) in tRNA = pseudouridine(38/39/40) in tRNA. Functionally, formation of pseudouridine at positions 38, 39 and 40 in the anticodon stem and loop of transfer RNAs. The polypeptide is tRNA pseudouridine synthase A (Neisseria meningitidis serogroup C (strain 053442)).